The primary structure comprises 454 residues: Bifunctional protein GlmU (454 aa).

A pyrophosphorylase region spans residues 1 to 225 (MNIVILAAGM…IWETLGVNSK (225 aa)). UDP-N-acetyl-alpha-D-glucosamine is bound by residues 6–9 (LAAG), Lys20, Gln71, 76–77 (GT), 98–100 (YGD), Gly135, Glu150, Asn165, and Asn223. Asp100 is a Mg(2+) binding site. Asn223 serves as a coordination point for Mg(2+). Positions 226–246 (LQLAEVERIHQGNQARRLLEA) are linker. The segment at 247-454 (GVTLLDPARI…WQRPVKQPKK (208 aa)) is N-acetyltransferase. UDP-N-acetyl-alpha-D-glucosamine contacts are provided by Arg329 and Lys347. Catalysis depends on His359, which acts as the Proton acceptor. Tyr362 and Asn373 together coordinate UDP-N-acetyl-alpha-D-glucosamine. Acetyl-CoA is bound by residues Ala376, 382 to 383 (NY), Ser401, Ala419, and Arg436.

The protein in the N-terminal section; belongs to the N-acetylglucosamine-1-phosphate uridyltransferase family. In the C-terminal section; belongs to the transferase hexapeptide repeat family. In terms of assembly, homotrimer. Mg(2+) is required as a cofactor.

It is found in the cytoplasm. It catalyses the reaction alpha-D-glucosamine 1-phosphate + acetyl-CoA = N-acetyl-alpha-D-glucosamine 1-phosphate + CoA + H(+). The catalysed reaction is N-acetyl-alpha-D-glucosamine 1-phosphate + UTP + H(+) = UDP-N-acetyl-alpha-D-glucosamine + diphosphate. The protein operates within nucleotide-sugar biosynthesis; UDP-N-acetyl-alpha-D-glucosamine biosynthesis; N-acetyl-alpha-D-glucosamine 1-phosphate from alpha-D-glucosamine 6-phosphate (route II): step 2/2. Its pathway is nucleotide-sugar biosynthesis; UDP-N-acetyl-alpha-D-glucosamine biosynthesis; UDP-N-acetyl-alpha-D-glucosamine from N-acetyl-alpha-D-glucosamine 1-phosphate: step 1/1. It participates in bacterial outer membrane biogenesis; LPS lipid A biosynthesis. Functionally, catalyzes the last two sequential reactions in the de novo biosynthetic pathway for UDP-N-acetylglucosamine (UDP-GlcNAc). The C-terminal domain catalyzes the transfer of acetyl group from acetyl coenzyme A to glucosamine-1-phosphate (GlcN-1-P) to produce N-acetylglucosamine-1-phosphate (GlcNAc-1-P), which is converted into UDP-GlcNAc by the transfer of uridine 5-monophosphate (from uridine 5-triphosphate), a reaction catalyzed by the N-terminal domain. The sequence is that of Bifunctional protein GlmU from Cupriavidus necator (strain ATCC 17699 / DSM 428 / KCTC 22496 / NCIMB 10442 / H16 / Stanier 337) (Ralstonia eutropha).